We begin with the raw amino-acid sequence, 308 residues long: F420-non-reducing hydrogenase subunit G (308 aa).

The protein belongs to the [NiFe]/[NiFeSe] hydrogenase small subunit family. As to quaternary structure, the F420-non-reducing hydrogenase is composed of three subunits; MvhA, MvhD and MvhG. It forms a complex with the heterodisulfide reductase (hdr).

Part of a complex that provides reducing equivalents for heterodisulfide reductase. The sequence is that of F420-non-reducing hydrogenase subunit G (mvhG) from Methanothermobacter marburgensis (strain ATCC BAA-927 / DSM 2133 / JCM 14651 / NBRC 100331 / OCM 82 / Marburg) (Methanobacterium thermoautotrophicum).